A 600-amino-acid polypeptide reads, in one-letter code: Translation initiation factor IF-2 (600 aa).

The 168-residue stretch at 112-279 folds into the tr-type G domain; it reads ERAPIITVMG…AINLQAEILE (168 aa). The tract at residues 121–128 is G1; that stretch reads GHVDHGKT. 121 to 128 is a binding site for GTP; the sequence is GHVDHGKT. The G2 stretch occupies residues 146-150; that stretch reads GITQH. Positions 167 to 170 are G3; that stretch reads DTPG. GTP-binding positions include 167–171 and 221–224; these read DTPGH and NKMD. Residues 221–224 form a G4 region; sequence NKMD. The G5 stretch occupies residues 257–259; that stretch reads SAL.

Belongs to the TRAFAC class translation factor GTPase superfamily. Classic translation factor GTPase family. IF-2 subfamily.

It localises to the cytoplasm. In terms of biological role, one of the essential components for the initiation of protein synthesis. Protects formylmethionyl-tRNA from spontaneous hydrolysis and promotes its binding to the 30S ribosomal subunits. Also involved in the hydrolysis of GTP during the formation of the 70S ribosomal complex. The protein is Translation initiation factor IF-2 of Mycoplasma mobile (strain ATCC 43663 / 163K / NCTC 11711) (Mesomycoplasma mobile).